A 900-amino-acid polypeptide reads, in one-letter code: Translation initiation factor IF-2 (900 aa).

The segment covering Leu80–Arg95 has biased composition (basic and acidic residues). Disordered regions lie at residues Leu80 to Arg106, Ala149 to Val169, and Asp221 to Lys268. Residues Gly253–Lys262 show a composition bias toward basic residues. The tr-type G domain occupies Thr397–Lys567. The tract at residues Gly406–Thr413 is G1. GTP is bound at residue Gly406–Thr413. The tract at residues Gly431–His435 is G2. Residues Asp453–Gly456 are G3. GTP-binding positions include Asp453–His457 and Asn507–Asp510. The interval Asn507 to Asp510 is G4. Residues Ser543–Lys545 are G5.

This sequence belongs to the TRAFAC class translation factor GTPase superfamily. Classic translation factor GTPase family. IF-2 subfamily.

The protein localises to the cytoplasm. Its function is as follows. One of the essential components for the initiation of protein synthesis. Protects formylmethionyl-tRNA from spontaneous hydrolysis and promotes its binding to the 30S ribosomal subunits. Also involved in the hydrolysis of GTP during the formation of the 70S ribosomal complex. This Chlorobium phaeovibrioides (strain DSM 265 / 1930) (Prosthecochloris vibrioformis (strain DSM 265)) protein is Translation initiation factor IF-2.